The sequence spans 70 residues: uncharacterized protein (70 aa).

Residues 12 to 32 traverse the membrane as a helical segment; sequence VLFMNFFSVFVCTIGTLFLVF.

The protein resides in the membrane. This is an uncharacterized protein from Saccharomyces cerevisiae (strain ATCC 204508 / S288c) (Baker's yeast).